Here is a 375-residue protein sequence, read N- to C-terminus: Elongation factor Tu (375 aa).

A tr-type G domain is found at 10–205 (KPHINVGAIG…TMDKYFVIPE (196 aa)). Residues 19-26 (GHVDHGKT) form a G1 region. 19–26 (GHVDHGKT) is a binding site for GTP. T26 is a binding site for Mg(2+). Residues 60-64 (GITIN) form a G2 region. A G3 region spans residues 81-84 (DCPG). GTP is bound by residues 81-85 (DCPGH) and 136-139 (NKMD). A G4 region spans residues 136–139 (NKMD). The tract at residues 173–175 (SAF) is G5.

This sequence belongs to the TRAFAC class translation factor GTPase superfamily. Classic translation factor GTPase family. EF-Tu/EF-1A subfamily. As to quaternary structure, monomer.

It is found in the cytoplasm. It catalyses the reaction GTP + H2O = GDP + phosphate + H(+). GTP hydrolase that promotes the GTP-dependent binding of aminoacyl-tRNA to the A-site of ribosomes during protein biosynthesis. The protein is Elongation factor Tu (tuf) of Spirochaeta aurantia.